The primary structure comprises 189 residues: Pyridoxal 5'-phosphate synthase subunit PdxT (189 aa).

L-glutamine is bound at residue 47–49 (GES). The active-site Nucleophile is the C79. L-glutamine contacts are provided by residues R106 and 135–136 (IR). Catalysis depends on charge relay system residues H171 and E173.

The protein belongs to the glutaminase PdxT/SNO family. In the presence of PdxS, forms a dodecamer of heterodimers. Only shows activity in the heterodimer.

It carries out the reaction aldehydo-D-ribose 5-phosphate + D-glyceraldehyde 3-phosphate + L-glutamine = pyridoxal 5'-phosphate + L-glutamate + phosphate + 3 H2O + H(+). It catalyses the reaction L-glutamine + H2O = L-glutamate + NH4(+). It functions in the pathway cofactor biosynthesis; pyridoxal 5'-phosphate biosynthesis. In terms of biological role, catalyzes the hydrolysis of glutamine to glutamate and ammonia as part of the biosynthesis of pyridoxal 5'-phosphate. The resulting ammonia molecule is channeled to the active site of PdxS. The protein is Pyridoxal 5'-phosphate synthase subunit PdxT of Desulforudis audaxviator (strain MP104C).